Consider the following 92-residue polypeptide: Acyl-CoA-binding domain-containing protein 6 (92 aa).

In terms of domain architecture, ACB spans 3–88; sequence LKEEFEEHAE…VKQLLEVAAS (86 aa). Residues 30-34, lysine 52, lysine 56, and tyrosine 75 contribute to the an acyl-CoA site; that span reads YGLYK.

Belongs to the ACBP family. In terms of assembly, interacts with PDLP8. Mostly expressed in seeds, stems, and siliques, and, to a lower extent, in leaves, flowers, and roots (at protein level). Highly expressed in root and shoot phloem companion cells.

The protein resides in the cytoplasm. The protein localises to the cell membrane. Binds medium- and long-chain acyl-CoA esters with very high affinity. May function as an intracellular carrier of acyl-CoA esters. Confers resistance to cold and freezing. Interacts with phosphatidylcholine and derivatives, but not phosphatidic acid and lysophosphatidylcholine. May be involved in phospholipid metabolism. The polypeptide is Acyl-CoA-binding domain-containing protein 6 (ACBP6) (Arabidopsis thaliana (Mouse-ear cress)).